A 119-amino-acid polypeptide reads, in one-letter code: Small ribosomal subunit protein bS16 (119 aa).

The segment covering 96-107 has biased composition (basic residues); that stretch reads RKKRRAYRQRRS. The segment at 96 to 119 is disordered; the sequence is RKKRRAYRQRRSTQREEAAKDATK. Over residues 108–119 the composition is skewed to basic and acidic residues; the sequence is TQREEAAKDATK.

Belongs to the bacterial ribosomal protein bS16 family.

The chain is Small ribosomal subunit protein bS16 from Chlamydia pneumoniae (Chlamydophila pneumoniae).